The sequence spans 876 residues: Leucine--tRNA ligase (876 aa).

Residues 42–52 (PYPSGKLHMGH) carry the 'HIGH' region motif. Positions 634-638 (KMSKS) match the 'KMSKS' region motif. Lysine 637 provides a ligand contact to ATP.

The protein belongs to the class-I aminoacyl-tRNA synthetase family.

Its subcellular location is the cytoplasm. The catalysed reaction is tRNA(Leu) + L-leucine + ATP = L-leucyl-tRNA(Leu) + AMP + diphosphate. The protein is Leucine--tRNA ligase of Neisseria gonorrhoeae (strain ATCC 700825 / FA 1090).